The primary structure comprises 220 residues: Deoxyribose-phosphate aldolase 2 (220 aa).

Catalysis depends on Asp89, which acts as the Proton donor/acceptor. The active-site Schiff-base intermediate with acetaldehyde is the Lys151. Lys180 acts as the Proton donor/acceptor in catalysis.

It belongs to the DeoC/FbaB aldolase family. DeoC type 1 subfamily.

Its subcellular location is the cytoplasm. It carries out the reaction 2-deoxy-D-ribose 5-phosphate = D-glyceraldehyde 3-phosphate + acetaldehyde. It functions in the pathway carbohydrate degradation; 2-deoxy-D-ribose 1-phosphate degradation; D-glyceraldehyde 3-phosphate and acetaldehyde from 2-deoxy-alpha-D-ribose 1-phosphate: step 2/2. Functionally, catalyzes a reversible aldol reaction between acetaldehyde and D-glyceraldehyde 3-phosphate to generate 2-deoxy-D-ribose 5-phosphate. This chain is Deoxyribose-phosphate aldolase 2, found in Staphylococcus aureus (strain COL).